Reading from the N-terminus, the 85-residue chain is UPF0297 protein LBUL_1485 (85 aa).

It belongs to the UPF0297 family.

This chain is UPF0297 protein LBUL_1485, found in Lactobacillus delbrueckii subsp. bulgaricus (strain ATCC BAA-365 / Lb-18).